A 331-amino-acid polypeptide reads, in one-letter code: ATP-dependent 6-phosphofructokinase (331 aa).

G12 provides a ligand contact to ATP. Residues R22–R26 and R55–D60 each bind ADP. ATP contacts are provided by residues R73 to F74 and G103 to S106. D104 provides a ligand contact to Mg(2+). Substrate is bound at residue T127 to D129. The active-site Proton acceptor is the D129. Position 156 (R156) interacts with ADP. Substrate is bound by residues R164 and M171–R173. Residues G187–E189, K213, and K215–H217 each bind ADP. Substrate contacts are provided by residues E224, R245, and H251–R254.

The protein belongs to the phosphofructokinase type A (PFKA) family. ATP-dependent PFK group I subfamily. Prokaryotic clade 'B1' sub-subfamily. Homotetramer. Mg(2+) is required as a cofactor.

It is found in the cytoplasm. It catalyses the reaction beta-D-fructose 6-phosphate + ATP = beta-D-fructose 1,6-bisphosphate + ADP + H(+). It functions in the pathway carbohydrate degradation; glycolysis; D-glyceraldehyde 3-phosphate and glycerone phosphate from D-glucose: step 3/4. Its activity is regulated as follows. Allosterically activated by ADP and other diphosphonucleosides, and allosterically inhibited by phosphoenolpyruvate. In terms of biological role, catalyzes the phosphorylation of D-fructose 6-phosphate to fructose 1,6-bisphosphate by ATP, the first committing step of glycolysis. In Yersinia enterocolitica serotype O:8 / biotype 1B (strain NCTC 13174 / 8081), this protein is ATP-dependent 6-phosphofructokinase.